Reading from the N-terminus, the 154-residue chain is MRKVKPARKLGRTTAHRKATLSNLSTQLLIHKRIETTEAKAKETRKVVEKIITKARKGTHHAQREIFSALRNKEAVQELFEEIVGRIGSRNGGYTRIIKLAPRFGDAAKMAVIELVDFAEAPAAASTAAKQDRAKRVKGSKKAETEKEGGESAE.

The disordered stretch occupies residues 127 to 154 (TAAKQDRAKRVKGSKKAETEKEGGESAE). Over residues 141-154 (KKAETEKEGGESAE) the composition is skewed to basic and acidic residues.

This sequence belongs to the bacterial ribosomal protein bL17 family. In terms of assembly, part of the 50S ribosomal subunit. Contacts protein L32.

The polypeptide is Large ribosomal subunit protein bL17 (Chlorobaculum parvum (strain DSM 263 / NCIMB 8327) (Chlorobium vibrioforme subsp. thiosulfatophilum)).